A 246-amino-acid chain; its full sequence is Pyridoxine 5'-phosphate synthase (246 aa).

Positions 8 and 19 each coordinate 3-amino-2-oxopropyl phosphate. Catalysis depends on H44, which acts as the Proton acceptor. The 1-deoxy-D-xylulose 5-phosphate site is built by R46 and H51. E76 functions as the Proton acceptor in the catalytic mechanism. T106 serves as a coordination point for 1-deoxy-D-xylulose 5-phosphate. The active-site Proton donor is the H198. 3-amino-2-oxopropyl phosphate is bound by residues D199 and 221 to 222 (GH).

Belongs to the PNP synthase family. Homooctamer; tetramer of dimers.

The protein resides in the cytoplasm. It carries out the reaction 3-amino-2-oxopropyl phosphate + 1-deoxy-D-xylulose 5-phosphate = pyridoxine 5'-phosphate + phosphate + 2 H2O + H(+). Its pathway is cofactor biosynthesis; pyridoxine 5'-phosphate biosynthesis; pyridoxine 5'-phosphate from D-erythrose 4-phosphate: step 5/5. Functionally, catalyzes the complicated ring closure reaction between the two acyclic compounds 1-deoxy-D-xylulose-5-phosphate (DXP) and 3-amino-2-oxopropyl phosphate (1-amino-acetone-3-phosphate or AAP) to form pyridoxine 5'-phosphate (PNP) and inorganic phosphate. This is Pyridoxine 5'-phosphate synthase from Brucella suis (strain ATCC 23445 / NCTC 10510).